We begin with the raw amino-acid sequence, 87 residues long: Phosphoribosyl-ATP pyrophosphatase (87 aa).

Belongs to the PRA-PH family.

It localises to the cytoplasm. The catalysed reaction is 1-(5-phospho-beta-D-ribosyl)-ATP + H2O = 1-(5-phospho-beta-D-ribosyl)-5'-AMP + diphosphate + H(+). It participates in amino-acid biosynthesis; L-histidine biosynthesis; L-histidine from 5-phospho-alpha-D-ribose 1-diphosphate: step 2/9. The protein is Phosphoribosyl-ATP pyrophosphatase of Bifidobacterium animalis subsp. lactis (strain AD011).